The following is a 1240-amino-acid chain: Pectate lyase L (1240 aa).

Residues 1 to 26 (MRNCKGLSILLCFLLVFFAMPFPAVA) form the signal peptide. 2 has catalytic activity regions span residues 27 to 551 (EEAE…VTVR) and 545 to 1240 (TLKV…KSIK). Residues Asp-325, Glu-349, Asp-350, Asp-1049, Asp-1073, Asp-1074, and Asp-1077 each coordinate Ca(2+). Lys-1117 serves as the catalytic Proton acceptor.

The protein belongs to the polysaccharide lyase 9 family. It depends on Ca(2+) as a cofactor.

The protein localises to the secreted. It carries out the reaction Eliminative cleavage of (1-&gt;4)-alpha-D-galacturonan to give oligosaccharides with 4-deoxy-alpha-D-galact-4-enuronosyl groups at their non-reducing ends.. Its activity is regulated as follows. Inhibited by the metal chelator ethylenediaminetetraacetic acid (EDTA). Its function is as follows. Cleaves polygalacturonate or partially methylated pectin. When assayed on polygalacturonate or on pectin, it releases monogalacturonate as the principal product. The chain is Pectate lyase L from Thermoclostridium stercorarium (Clostridium stercorarium).